Reading from the N-terminus, the 209-residue chain is Ephrin-A2 (209 aa).

A signal peptide spans 1-20; the sequence is MAPAQRPLLPLLLLLLPLRA. Positions 30–170 constitute an Ephrin RBD domain; it reads ADRYAVYWNR…RLKVYVRPTN (141 aa). The N-linked (GlcNAc...) asparagine glycan is linked to Asn38. 2 disulfide bridges follow: Cys69/Cys110 and Cys98/Cys159. N-linked (GlcNAc...) asparagine glycans are attached at residues Asn170 and Asn184. A lipid anchor (GPI-anchor amidated asparagine) is attached at Asn184. Residues 185-209 constitute a propeptide, removed in mature form; the sequence is SSCSGLGGCHLFLTTVPVLWSLLGS.

The protein belongs to the ephrin family. Binds to the receptor tyrosine kinases EPHA3, EPHA4 and EPHA5. Interacts with EPHA8; activates EPHA8. In terms of tissue distribution, expressed in myogenic progenitor cells.

It is found in the cell membrane. Functionally, cell surface GPI-bound ligand for Eph receptors, a family of receptor tyrosine kinases which are crucial for migration, repulsion and adhesion during neuronal, vascular and epithelial development. Binds promiscuously Eph receptors residing on adjacent cells, leading to contact-dependent bidirectional signaling into neighboring cells. The signaling pathway downstream of the receptor is referred to as forward signaling while the signaling pathway downstream of the ephrin ligand is referred to as reverse signaling. With the EPHA2 receptor may play a role in bone remodeling through regulation of osteoclastogenesis and osteoblastogenesis. The chain is Ephrin-A2 (Efna2) from Mus musculus (Mouse).